The sequence spans 364 residues: D-alanine--D-alanine ligase (364 aa).

The 214-residue stretch at 134–347 (RRLACINGLK…YPDLLDELIN (214 aa)) folds into the ATP-grasp domain. ATP is bound at residue 167–222 (ASEFGWPLFVKPCSLGSSVGIHKANNMDELNAAVADALRYDEEILVEEFIVGREIE). 3 residues coordinate Mg(2+): D300, E314, and N316.

It belongs to the D-alanine--D-alanine ligase family. The cofactor is Mg(2+). Mn(2+) serves as cofactor.

Its subcellular location is the cytoplasm. It carries out the reaction 2 D-alanine + ATP = D-alanyl-D-alanine + ADP + phosphate + H(+). It functions in the pathway cell wall biogenesis; peptidoglycan biosynthesis. Cell wall formation. The protein is D-alanine--D-alanine ligase of Legionella pneumophila (strain Paris).